We begin with the raw amino-acid sequence, 1118 residues long: DNA mismatch repair protein MSH1, mitochondrial (1118 aa).

768–775 (GPNGGGKS) contacts ATP.

The protein belongs to the DNA mismatch repair MutS family.

It is found in the mitochondrion. The protein localises to the plastid. It localises to the chloroplast. In terms of biological role, DNA mismatch repair protein specifically involved in maintenance of mitochondrial genome configuration by controlling specific rearranged portion. Functions by suppressing asymmetric recombination at some repeat pairs. This chain is DNA mismatch repair protein MSH1, mitochondrial (MSH1), found in Arabidopsis thaliana (Mouse-ear cress).